The chain runs to 163 residues: Glycine cleavage system H protein, mitochondrial (163 aa).

Residues 1 to 34 constitute a mitochondrion transit peptide; it reads MALRMWASSAANALGVSCAPKSHLLPALSLSRCF. The region spanning 56 to 137 is the Lipoyl-binding domain; it reads VATIGITDHA…YEEGWMVKVK (82 aa). The residue at position 96 (lysine 96) is an N6-lipoyllysine.

This sequence belongs to the GcvH family. In terms of assembly, the glycine cleavage system is composed of four proteins: P, T, L and H. Requires (R)-lipoate as cofactor.

Its subcellular location is the mitochondrion. Functionally, the glycine cleavage system catalyzes the degradation of glycine. The H protein shuttles the methylamine group of glycine from the P protein to the T protein. In Mesembryanthemum crystallinum (Common ice plant), this protein is Glycine cleavage system H protein, mitochondrial (GDCSH).